A 409-amino-acid chain; its full sequence is MKTLELALPPSPPSLVPSFNYNSTARSVGNDVRTNFDVQLFLRKPKHQKSEPVVVIQQPQIQPQNPSSRCSTSDILRLMDSLSLPGNEDIYSCLAKESARENDQRGAHELQVHIMKSSIRPTITFINRLLLMHVSCGRLDITRQMFDRMPHRDFHSWAIVFLGCIEMGDYEDAAFLFVSMLKHSQKGAFKIPSWILGCVLKACAMIRDFELGKQVHALCHKLGFIDEEDSYLSGSLIRFYGEFRCLEDANLVLHQLSNANTVAWAAKVTNDYREGEFQEVIRDFIEMGNHGIKKNVSVFSNVLKACSWVSDGGRSGQQVHANAIKLGFESDCLIRCRLIEMYGKYGKVKDAEKVFKSSKDETSVSCWNAMVASYMQNGIYIEAIKLLYQMKATGIKAHDTLLNEAHLQM.

PPR repeat units follow at residues 87-121, 122-152, 153-187, 192-226, 229-259, 260-294, 295-330, 331-361, and 363-397; these read NEDI…SIRP, TITF…MPHR, DFHS…SQKG, PSWI…GFID, DSYL…LSNA, NTVA…GIKK, NVSV…GFES, DCLI…SKDE, and SVSC…GIKA.

This sequence belongs to the PPR family. PCMP-A subfamily.

The chain is Pentatricopeptide repeat-containing protein At1g31790 (PCMP-A1) from Arabidopsis thaliana (Mouse-ear cress).